The following is a 434-amino-acid chain: MAIRLNYLDTSFERDFAAFLTTKREVSEDVNAVVRAIIDDVRARGDAALADYSARFDGIDFTVTGMAVTSAEIDAAIHAVAPEVLGALKVAATRIEAHHRRQLPKDDIYEDQMGVGLGSRWTPIDAVGLYVPGGTASYPSSVLMNALPAKVAGVPRIVMVVPASGGSINPAVLAAARLAGVEEIYRIGGAQAVAALAYGTETIEPVAKIVGPGNAYVAAAKRQVFGTVGIDMIAGPSEVLVIADRDNDPDWIAADLLAQAEHDAGAQAILITDDAAFGDAVEKAVERQLKTLPRAETAAASWRDFGAVILVPDFDKAVPLANRIAPEHLELATADPDAMVPAIRNAGAIFIGRHTPEVIGDYVGGSNHVLPTARSARFSSGLGVLDYVKRTSILRLGPDQLRILGPAAIALARSEGLEAHARSVAIRLNLGEEG.

Residues tyrosine 130, glutamine 191, and asparagine 214 each contribute to the NAD(+) site. Substrate-binding residues include serine 237, glutamine 259, and histidine 262. Zn(2+) contacts are provided by glutamine 259 and histidine 262. Active-site proton acceptor residues include glutamate 327 and histidine 328. Substrate is bound by residues histidine 328, aspartate 361, glutamate 415, and histidine 420. Residue aspartate 361 participates in Zn(2+) binding. Histidine 420 contributes to the Zn(2+) binding site.

It belongs to the histidinol dehydrogenase family. The cofactor is Zn(2+).

The catalysed reaction is L-histidinol + 2 NAD(+) + H2O = L-histidine + 2 NADH + 3 H(+). Its pathway is amino-acid biosynthesis; L-histidine biosynthesis; L-histidine from 5-phospho-alpha-D-ribose 1-diphosphate: step 9/9. Catalyzes the sequential NAD-dependent oxidations of L-histidinol to L-histidinaldehyde and then to L-histidine. This is Histidinol dehydrogenase from Rhizobium meliloti (strain 1021) (Ensifer meliloti).